The primary structure comprises 104 residues: Large ribosomal subunit protein uL24 (104 aa).

This sequence belongs to the universal ribosomal protein uL24 family. As to quaternary structure, part of the 50S ribosomal subunit.

Functionally, one of two assembly initiator proteins, it binds directly to the 5'-end of the 23S rRNA, where it nucleates assembly of the 50S subunit. Its function is as follows. One of the proteins that surrounds the polypeptide exit tunnel on the outside of the subunit. The chain is Large ribosomal subunit protein uL24 from Hydrogenovibrio crunogenus (strain DSM 25203 / XCL-2) (Thiomicrospira crunogena).